Consider the following 180-residue polypeptide: NAD(P)H-quinone oxidoreductase subunit I, chloroplastic (180 aa).

4Fe-4S ferredoxin-type domains follow at residues 55-84 (GRIHFEFDKCIACEVCVRVCPIDLPLVDWK) and 95-124 (LNYSIDFGVCIFCGNCVEYCPTNCLSMTEE). [4Fe-4S] cluster is bound by residues C64, C67, C70, C74, C104, C107, C110, and C114.

This sequence belongs to the complex I 23 kDa subunit family. As to quaternary structure, NDH is composed of at least 16 different subunits, 5 of which are encoded in the nucleus. The cofactor is [4Fe-4S] cluster.

The protein resides in the plastid. It is found in the chloroplast thylakoid membrane. It catalyses the reaction a plastoquinone + NADH + (n+1) H(+)(in) = a plastoquinol + NAD(+) + n H(+)(out). The catalysed reaction is a plastoquinone + NADPH + (n+1) H(+)(in) = a plastoquinol + NADP(+) + n H(+)(out). Its function is as follows. NDH shuttles electrons from NAD(P)H:plastoquinone, via FMN and iron-sulfur (Fe-S) centers, to quinones in the photosynthetic chain and possibly in a chloroplast respiratory chain. The immediate electron acceptor for the enzyme in this species is believed to be plastoquinone. Couples the redox reaction to proton translocation, and thus conserves the redox energy in a proton gradient. This Sorghum bicolor (Sorghum) protein is NAD(P)H-quinone oxidoreductase subunit I, chloroplastic.